A 346-amino-acid chain; its full sequence is MLKVAIVGASGYTGIELLRLLHGHPEVSVTCVTSEQSAGKNVAEIFPTLRSRYNLVLENLEPVRIAERADFIFTALPHKAAMEVVPTFLKLGKRVVDLSADYRLHDAREYAAWYEPHMNPELLKEAIYGLPELRREKIAEADLVANPGCYPTSIILGLAPLLKKKLVNPATIIADAKSGVSGAGRSAKVDNLYCEVNDGFKAYGVGGVHRHIPEIEQELSLLAGKQLTITFTPHLVPMDRGILSTIYAEPAGEVSLAGLVELYRDFYHGEAFVRVLPENNFPSTAFVRGSNFCDIGLTVDKRTGRIVIVSAIDNLIKGASGQAIQNMNIMNGFPENLGLESLGLFP.

The active site involves C149.

The protein belongs to the NAGSA dehydrogenase family. Type 1 subfamily.

It localises to the cytoplasm. The enzyme catalyses N-acetyl-L-glutamate 5-semialdehyde + phosphate + NADP(+) = N-acetyl-L-glutamyl 5-phosphate + NADPH + H(+). Its pathway is amino-acid biosynthesis; L-arginine biosynthesis; N(2)-acetyl-L-ornithine from L-glutamate: step 3/4. In terms of biological role, catalyzes the NADPH-dependent reduction of N-acetyl-5-glutamyl phosphate to yield N-acetyl-L-glutamate 5-semialdehyde. This is N-acetyl-gamma-glutamyl-phosphate reductase from Geotalea daltonii (strain DSM 22248 / JCM 15807 / FRC-32) (Geobacter daltonii).